The chain runs to 406 residues: MADKIVLAYSGGLDTSVAIPWLKDKGYEVIAVSLDVGQHGKQIENIQKKALKIGAIQSFIIDGKDEFAENYVSKVIKSNALYEGEYPLVSALSRPLIIEKLVQTAHDNNAVAIAHGSTGKGNDQVRFEAAIHALDPEMKIEAPIRDFQWSREEEIEYAHQHNVPVPINFDSPYSIDENLWGRSNEAGILENPWNQAPADAYALTSPVEDTPDEADFVDIEFKNGLPISVNDQEMKMADLIVYLNKLAGIHGIGRIDHVENRLIGIKSREIYETPAAAVIMTAHKDLEDITLEHDVAHFKPIIEQKITNLIYNAMWISPLFDALNKFIDETQKVVNGTVKMKLYKGTATAVARKSENNSLYSEKLATYTSANSFDEQAAVGFMKLYTLPATVYEQVNHIHSKEKEEI.

Alanine 8 to serine 16 serves as a coordination point for ATP. Tyrosine 86 contributes to the L-citrulline binding site. An ATP-binding site is contributed by glycine 116. L-aspartate contacts are provided by threonine 118, asparagine 122, and aspartate 123. Asparagine 122 is a binding site for L-citrulline. 5 residues coordinate L-citrulline: arginine 126, serine 174, serine 183, glutamate 259, and tyrosine 271.

Belongs to the argininosuccinate synthase family. Type 1 subfamily. In terms of assembly, homotetramer.

Its subcellular location is the cytoplasm. The catalysed reaction is L-citrulline + L-aspartate + ATP = 2-(N(omega)-L-arginino)succinate + AMP + diphosphate + H(+). The protein operates within amino-acid biosynthesis; L-arginine biosynthesis; L-arginine from L-ornithine and carbamoyl phosphate: step 2/3. In Oenococcus oeni (strain ATCC BAA-331 / PSU-1), this protein is Argininosuccinate synthase.